Here is a 630-residue protein sequence, read N- to C-terminus: 1-deoxy-D-xylulose-5-phosphate synthase (630 aa).

Residues histidine 72 and 113 to 115 each bind thiamine diphosphate; that span reads GHS. Residue aspartate 144 participates in Mg(2+) binding. Thiamine diphosphate is bound by residues 145 to 146, asparagine 173, tyrosine 284, and glutamate 367; that span reads GA. A Mg(2+)-binding site is contributed by asparagine 173.

It belongs to the transketolase family. DXPS subfamily. In terms of assembly, homodimer. Mg(2+) is required as a cofactor. It depends on thiamine diphosphate as a cofactor.

The enzyme catalyses D-glyceraldehyde 3-phosphate + pyruvate + H(+) = 1-deoxy-D-xylulose 5-phosphate + CO2. The protein operates within metabolic intermediate biosynthesis; 1-deoxy-D-xylulose 5-phosphate biosynthesis; 1-deoxy-D-xylulose 5-phosphate from D-glyceraldehyde 3-phosphate and pyruvate: step 1/1. Its function is as follows. Catalyzes the acyloin condensation reaction between C atoms 2 and 3 of pyruvate and glyceraldehyde 3-phosphate to yield 1-deoxy-D-xylulose-5-phosphate (DXP). The chain is 1-deoxy-D-xylulose-5-phosphate synthase from Bacillus cereus (strain AH187).